A 445-amino-acid polypeptide reads, in one-letter code: MGKEKVHISLVVIGHVDSGKSTTTGHLIYKCGGIDKRTIEKFEKEASEMGKGSFKYAWVLDKLKAERERCITIDIALWKFETAKSVFTIIDAPGHRDFIKNMITGTSQADAAVLVIDSTTGGFEAGISKDGQTREHALLAYTLGVKQMIVATNKFDDKTVKYSQARYEEIKKEVSGYLKKVGYNPEKVPFIPISGWNGDNMIEASENMGWYKGLTLIGALDNLEPPKRPSDKPLRLPLQDVYKIGGIGTVPVGRVETGVLKPGDVVTFAPNNLTTEVKSVEMHHEALTEAVPGDNVGFNVKNVSVKDIRRGYVASNAKNDPAKEAADFTAQVIILNHPGQIGNGYAPVLDCHTCHIACKFATIQTKIDRRSGKELEAEPKFIKSGDAAIVLMKPQKPMCVESFTDYPPLGVSCGDMRQTVAVGVIKSVNKKENTGKVTKAAQKKK.

In terms of domain architecture, tr-type G spans 5–230 (KVHISLVVIG…DNLEPPKRPS (226 aa)). The segment at 14-21 (GHVDSGKS) is G1. GTP is bound at residue 14-21 (GHVDSGKS). At lysine 55 the chain carries N6,N6-dimethyllysine. The interval 70-74 (CITID) is G2. Lysine 79 is subject to N6,N6,N6-trimethyllysine. A G3 region spans residues 91-94 (DAPG). GTP-binding positions include 91-95 (DAPGH) and 153-156 (NKFD). The segment at 153–156 (NKFD) is G4. Lysine 187 carries the post-translational modification N6,N6,N6-trimethyllysine. The tract at residues 194–196 (SGW) is G5. Lysine 261 carries the N6-methyllysine modification. Residues lysine 306 and lysine 396 each carry the N6,N6,N6-trimethyllysine modification.

The protein belongs to the TRAFAC class translation factor GTPase superfamily. Classic translation factor GTPase family. EF-Tu/EF-1A subfamily.

Its subcellular location is the cytoplasm. In terms of biological role, this protein promotes the GTP-dependent binding of aminoacyl-tRNA to the A-site of ribosomes during protein biosynthesis. This Euglena gracilis protein is Elongation factor 1-alpha (TEF).